The chain runs to 454 residues: Exodeoxyribonuclease 7 large subunit (454 aa).

Residues 337 to 352 (ANQRQQRASQRLRQQN) are compositionally biased toward low complexity. Residues 337–359 (ANQRQQRASQRLRQQNPQPRIHR) form a disordered region.

It belongs to the XseA family. As to quaternary structure, heterooligomer composed of large and small subunits.

It localises to the cytoplasm. The enzyme catalyses Exonucleolytic cleavage in either 5'- to 3'- or 3'- to 5'-direction to yield nucleoside 5'-phosphates.. Bidirectionally degrades single-stranded DNA into large acid-insoluble oligonucleotides, which are then degraded further into small acid-soluble oligonucleotides. In Salmonella arizonae (strain ATCC BAA-731 / CDC346-86 / RSK2980), this protein is Exodeoxyribonuclease 7 large subunit.